Consider the following 320-residue polypeptide: Cytochrome f (320 aa).

The N-terminal stretch at 1–35 is a signal peptide; that stretch reads MQTRNTFSWIREEITRSISVSLIIYIITRASISSA. Residues Y36, C56, C59, and H60 each contribute to the heme site. The chain crosses the membrane as a helical span at residues 286 to 306; the sequence is VQGLLFFLASVVLAQIFLVLK.

The protein belongs to the cytochrome f family. As to quaternary structure, the 4 large subunits of the cytochrome b6-f complex are cytochrome b6, subunit IV (17 kDa polypeptide, petD), cytochrome f and the Rieske protein, while the 4 small subunits are PetG, PetL, PetM and PetN. The complex functions as a dimer. The cofactor is heme.

The protein localises to the plastid. Its subcellular location is the chloroplast thylakoid membrane. Component of the cytochrome b6-f complex, which mediates electron transfer between photosystem II (PSII) and photosystem I (PSI), cyclic electron flow around PSI, and state transitions. In Draba nemorosa (Woodland whitlowgrass), this protein is Cytochrome f.